The sequence spans 515 residues: Kelch repeat protein M-T8 (515 aa).

Residues 16-82 enclose the BTB domain; that stretch reads CDVEIVAEGK…MYTESIELHK (67 aa). Kelch repeat units lie at residues 280-326, 328-374, 376-423, 424-471, and 473-512; these read VLYF…AIGG, IYII…CYKN, IWVL…VYKE, RLYC…VYND, and LYVF…YATY.

This sequence belongs to the poxviruses Kelch family.

In Oryctolagus cuniculus (Rabbit), this protein is Kelch repeat protein M-T8.